A 526-amino-acid polypeptide reads, in one-letter code: Probable inorganic phosphate transporter 1-3 (526 aa).

Topologically, residues 1-21 (MADGQLKVLTTLDHARTQWYH) are cytoplasmic. A helical transmembrane segment spans residues 22-42 (FMAIVIAGMGFFTDAYDLFCI). At 43-70 (SLVSKLLGRIYYTDLAGDNPGSLPPNVS) the chain is on the extracellular side. The chain crosses the membrane as a helical span at residues 71 to 91 (AAVNGVALCGTLAGQLFFGWL). The Cytoplasmic segment spans residues 92 to 99 (GDKLGRKS). A helical transmembrane segment spans residues 100–120 (VYGFTLVLMVVCSVASGLSFG). Over 121–124 (RTAK) the chain is Extracellular. Residues 125 to 145 (GVVATLCFFRFWLGFGIGGDY) traverse the membrane as a helical segment. The Cytoplasmic portion of the chain corresponds to 146–163 (PLSATIMSEYANKRTRGA). Residues 164-184 (FIAAVFAMQGFGILFGAIVAL) traverse the membrane as a helical segment. The Extracellular segment spans residues 185–211 (VVSAGFRNAYPAPSYADGRAASLVPEA). Residues 212 to 232 (DYVWRIILMFGTVPAALTYYW) form a helical membrane-spanning segment. At 233-294 (RMKMPETARY…GLFSRQFVRR (62 aa)) the chain is on the cytoplasmic side. Residues 295–315 (HGVHLVATTSTWFLLDIAFYS) form a helical membrane-spanning segment. Residues 316 to 349 (QNLFQKDIFSKVGWIPPARTMNAVEEVFRIARAQ) are Extracellular-facing. A helical membrane pass occupies residues 350–370 (ALIALCGTIPGYWFTVAFIDV). At 371–373 (AGR) the chain is on the cytoplasmic side. Residues 374–394 (FAIQLMGFAMMTVFMLGLAAP) form a helical membrane-spanning segment. The Extracellular segment spans residues 395 to 407 (YHHWTTPGNHTGF). A helical membrane pass occupies residues 408–428 (VVMYGFTFFFANFGPNATTFI). Residues 429 to 444 (VPAEIYPARLRSTCHG) are Cytoplasmic-facing. Residues 445–465 (ISAAAGKAGAIVGAFGFLYAA) traverse the membrane as a helical segment. At 466 to 483 (QDPHKPEAGYKPGIGIRN) the chain is on the extracellular side. Residues 484 to 504 (ALFVLAGTNFLGMLMTLLVPE) form a helical membrane-spanning segment. Over 505–526 (SKGMSLEEVSKENVADDEEATA) the chain is Cytoplasmic.

Belongs to the major facilitator superfamily. Phosphate:H(+) symporter (TC 2.A.1.9) family. As to expression, expressed at low levels in roots.

The protein resides in the membrane. Functionally, high-affinity transporter for external inorganic phosphate. The sequence is that of Probable inorganic phosphate transporter 1-3 (PHT1-3) from Oryza sativa subsp. japonica (Rice).